A 529-amino-acid polypeptide reads, in one-letter code: Bifunctional purine biosynthesis protein PurH (529 aa).

The region spanning 1-148 (MQQRRPVRRA…KNHKDVAIVV (148 aa)) is the MGS-like domain. An N6-acetyllysine modification is found at Lys-287.

This sequence belongs to the PurH family.

It catalyses the reaction (6R)-10-formyltetrahydrofolate + 5-amino-1-(5-phospho-beta-D-ribosyl)imidazole-4-carboxamide = 5-formamido-1-(5-phospho-D-ribosyl)imidazole-4-carboxamide + (6S)-5,6,7,8-tetrahydrofolate. It carries out the reaction IMP + H2O = 5-formamido-1-(5-phospho-D-ribosyl)imidazole-4-carboxamide. It functions in the pathway purine metabolism; IMP biosynthesis via de novo pathway; 5-formamido-1-(5-phospho-D-ribosyl)imidazole-4-carboxamide from 5-amino-1-(5-phospho-D-ribosyl)imidazole-4-carboxamide (10-formyl THF route): step 1/1. The protein operates within purine metabolism; IMP biosynthesis via de novo pathway; IMP from 5-formamido-1-(5-phospho-D-ribosyl)imidazole-4-carboxamide: step 1/1. In Shigella dysenteriae serotype 1 (strain Sd197), this protein is Bifunctional purine biosynthesis protein PurH.